Consider the following 760-residue polypeptide: MDTSGSTTDFGDHVVLRYGGTKEMVPLIRHEQMLDMLMERARQIVQGFGSLDTRNMYLFRHEYNSPTLLFPITSPSQIASFSKNPGCILEIILVDRTETAVIPHVVEPESYMLPTFCDFCGELLTGLLRQGVKCKNCNRNFHKRVRMQQGIIVEHLDPLPQDRGLLDRPCYPHCHQRLLEFRCPRCQRLLVSLPHTLIEHSYRQFTVCKVCDHLLVGLMKQGLKCRDCGVNVHRKCAMELPSNCILSENAISRVNFADSEAEQASSSDNIPLFRLPDDIKIKKKFKKKFLHREKRIEKYVFSRPPGQVGVRATEKKNLEGWMIHFILSDPERRLKHYWMMQNNAIHLYNEYSEGIGVNPNRVYRIIPLAEITSVVQNNGKSVLAKHPPHCFEIRTTTNTVFCVGEDYHAFSGGPPKKIPRSMSVRPTSNTTMWFQFIKESLQPPSRNNEENAEQALEFANLYQVLSDKTLGSGQFGTVYSAIQRHSGKEVAVKVISKERFSKKGSGAESMRAEVAILQQTCHPGIVCLEFMCETKDKIFVVMEKMNGDMLEMILSQELGRLNSRATKFLLVQILCALKYLHDQGIAHCDLKPENVLLSDMGSNFPQTKICDFGYARFIPESQFRKTVVGTPAYLPPEVLQRKGYNKSLDMWSVGVIIYVTLSGTFPFNEGEEVSISEQIQNASFMFPTEPWSEVEPLAVDLIQKLLKVEIEARMSIEKCLEHGWLKGEQLYRDLRDLEVRLNTPRYLTSPQDDVLYGPLR.

2 consecutive Phorbol-ester/DAG-type zinc fingers follow at residues 103–153 and 194–244; these read PHVV…GIIV and PHTL…PSNC. Residues 316–444 form the PH domain; sequence KNLEGWMIHF…QFIKESLQPP (129 aa). The 262-residue stretch at 464-725 folds into the Protein kinase domain; that stretch reads VLSDKTLGSG…IEKCLEHGWL (262 aa). ATP-binding positions include 470 to 478 and Lys-493; that span reads LGSGQFGTV. The active-site Proton acceptor is Asp-589. A Phosphothreonine modification is found at Thr-626.

It belongs to the protein kinase superfamily. CAMK Ser/Thr protein kinase family. PKD subfamily. The cofactor is Mg(2+). In terms of processing, prolonged phosphorylation at Thr-626 results in ubiquitination and degradation.

The protein resides in the cytoplasm. It is found in the membrane. It catalyses the reaction L-seryl-[protein] + ATP = O-phospho-L-seryl-[protein] + ADP + H(+). It carries out the reaction L-threonyl-[protein] + ATP = O-phospho-L-threonyl-[protein] + ADP + H(+). Its activity is regulated as follows. Activated by DAG and phorbol esters. Phorbol-ester/DAG-type domain 1 binds phorbol ester with high affinity and mediates accumulation at the cell periphery. Phorbol-ester/DAG-type domain 2 binds phorbol ester with low affinity but may mediate initial contact, resulting in a conformational change allowing previously occluded domain 1 to anchor the kinase. Phosphorylation on Thr-626 is then also required for activation and may also result in a further conformational change. Functionally, converts transient diacylglycerol (DAG) signals into prolonged physiological effects, independently of PKC. Role in the regulation of growth and neuromuscular control of movement. Involved in immune response to S.aureus bacterium by activating transcription factor hlh-30 downstream of phospholipase plc-1. This is Serine/threonine-protein kinase dkf-1 from Caenorhabditis briggsae.